We begin with the raw amino-acid sequence, 534 residues long: CTP synthase (534 aa).

Residues 1-267 (MTKYIFVTGG…DQIVCDHLKL (267 aa)) are amidoligase domain. Serine 13 contacts CTP. Serine 13 is a binding site for UTP. 14-19 (SIGKGI) lines the ATP pocket. Residue tyrosine 54 coordinates L-glutamine. Aspartate 71 contributes to the ATP binding site. Residues aspartate 71 and glutamate 141 each contribute to the Mg(2+) site. Residues 148–150 (DIE), 188–193 (KTKPTQ), and lysine 224 contribute to the CTP site. UTP is bound by residues 188 to 193 (KTKPTQ) and lysine 224. The 243-residue stretch at 292–534 (KIALVGKYVE…FVTAAVENAK (243 aa)) folds into the Glutamine amidotransferase type-1 domain. Residue glycine 354 participates in L-glutamine binding. Cysteine 381 functions as the Nucleophile; for glutamine hydrolysis in the catalytic mechanism. L-glutamine is bound by residues 382–385 (LGMQ), glutamate 405, and arginine 463. Residues histidine 508 and glutamate 510 contribute to the active site.

Belongs to the CTP synthase family. In terms of assembly, homotetramer.

It catalyses the reaction UTP + L-glutamine + ATP + H2O = CTP + L-glutamate + ADP + phosphate + 2 H(+). The enzyme catalyses L-glutamine + H2O = L-glutamate + NH4(+). The catalysed reaction is UTP + NH4(+) + ATP = CTP + ADP + phosphate + 2 H(+). Its pathway is pyrimidine metabolism; CTP biosynthesis via de novo pathway; CTP from UDP: step 2/2. Allosterically activated by GTP, when glutamine is the substrate; GTP has no effect on the reaction when ammonia is the substrate. The allosteric effector GTP functions by stabilizing the protein conformation that binds the tetrahedral intermediate(s) formed during glutamine hydrolysis. Inhibited by the product CTP, via allosteric rather than competitive inhibition. Functionally, catalyzes the ATP-dependent amination of UTP to CTP with either L-glutamine or ammonia as the source of nitrogen. Regulates intracellular CTP levels through interactions with the four ribonucleotide triphosphates. In Streptococcus thermophilus (strain ATCC BAA-250 / LMG 18311), this protein is CTP synthase.